The sequence spans 508 residues: Maturase K (508 aa).

It belongs to the intron maturase 2 family. MatK subfamily.

The protein localises to the plastid. It localises to the chloroplast. Functionally, usually encoded in the trnK tRNA gene intron. Probably assists in splicing its own and other chloroplast group II introns. This is Maturase K from Huidobria chilensis (Loasa chilensis).